The following is a 335-amino-acid chain: tRNA N6-adenosine threonylcarbamoyltransferase (335 aa).

Residues histidine 111 and histidine 115 each contribute to the Fe cation site. Substrate-binding positions include 133-137 (IISGG), aspartate 166, glycine 179, aspartate 183, and asparagine 268. Residue aspartate 296 participates in Fe cation binding.

The protein belongs to the KAE1 / TsaD family. Fe(2+) serves as cofactor.

Its subcellular location is the cytoplasm. The catalysed reaction is L-threonylcarbamoyladenylate + adenosine(37) in tRNA = N(6)-L-threonylcarbamoyladenosine(37) in tRNA + AMP + H(+). Functionally, required for the formation of a threonylcarbamoyl group on adenosine at position 37 (t(6)A37) in tRNAs that read codons beginning with adenine. Is involved in the transfer of the threonylcarbamoyl moiety of threonylcarbamoyl-AMP (TC-AMP) to the N6 group of A37, together with TsaE and TsaB. TsaD likely plays a direct catalytic role in this reaction. The sequence is that of tRNA N6-adenosine threonylcarbamoyltransferase from Aquifex aeolicus (strain VF5).